The chain runs to 418 residues: NADH-quinone oxidoreductase subunit D (418 aa).

This sequence belongs to the complex I 49 kDa subunit family. NDH-1 is composed of 14 different subunits. Subunits NuoB, C, D, E, F, and G constitute the peripheral sector of the complex.

Its subcellular location is the cell inner membrane. It catalyses the reaction a quinone + NADH + 5 H(+)(in) = a quinol + NAD(+) + 4 H(+)(out). Its function is as follows. NDH-1 shuttles electrons from NADH, via FMN and iron-sulfur (Fe-S) centers, to quinones in the respiratory chain. The immediate electron acceptor for the enzyme in this species is believed to be ubiquinone. Couples the redox reaction to proton translocation (for every two electrons transferred, four hydrogen ions are translocated across the cytoplasmic membrane), and thus conserves the redox energy in a proton gradient. This Neisseria meningitidis serogroup B (strain ATCC BAA-335 / MC58) protein is NADH-quinone oxidoreductase subunit D.